Reading from the N-terminus, the 190-residue chain is Elongation factor P 2 (190 aa).

It belongs to the elongation factor P family.

It is found in the cytoplasm. The protein operates within protein biosynthesis; polypeptide chain elongation. Involved in peptide bond synthesis. Stimulates efficient translation and peptide-bond synthesis on native or reconstituted 70S ribosomes in vitro. Probably functions indirectly by altering the affinity of the ribosome for aminoacyl-tRNA, thus increasing their reactivity as acceptors for peptidyl transferase. This is Elongation factor P 2 (efp2) from Chlamydia trachomatis serovar D (strain ATCC VR-885 / DSM 19411 / UW-3/Cx).